The following is a 93-amino-acid chain: uncharacterized protein (93 aa).

A disordered region spans residues 26-73 (NRGTIFRPMTRNSGIVGRRGGPVAPAPFRNNVQKPGTRPPGFKPPSGV).

This is an uncharacterized protein from Caenorhabditis elegans.